We begin with the raw amino-acid sequence, 294 residues long: Large ribosomal subunit protein uL2c (294 aa).

Residues 224 to 249 (VMNPVDHPHGGGGEGKSPIGRSRPVT) are disordered.

The protein belongs to the universal ribosomal protein uL2 family. As to quaternary structure, part of the 50S ribosomal subunit.

The protein localises to the plastid. It localises to the chloroplast. This is Large ribosomal subunit protein uL2c (rpl2) from Porphyra purpurea (Red seaweed).